A 497-amino-acid polypeptide reads, in one-letter code: 4,4'-diaponeurosporene oxygenase (497 aa).

Val7 to Ile19 is a binding site for FAD.

This sequence belongs to the carotenoid/retinoid oxidoreductase family. CrtP subfamily. FAD is required as a cofactor.

It catalyses the reaction all-trans-4,4'-diaponeurosporene + 2 AH2 + 2 O2 = 4,4'-diaponeurosporenal + 2 A + 3 H2O. It functions in the pathway carotenoid biosynthesis; staphyloxanthin biosynthesis; staphyloxanthin from farnesyl diphosphate: step 3/5. Involved in the biosynthesis of the yellow-orange carotenoid staphyloxanthin, which plays a role in the virulence via its protective function against oxidative stress. Catalyzes the oxidation of the terminal methyl side group of 4,4'-diaponeurosporene to form 4,4'-diaponeurosporen-4-al. The protein is 4,4'-diaponeurosporene oxygenase of Staphylococcus aureus (strain MRSA252).